The sequence spans 525 residues: GMP synthase [glutamine-hydrolyzing] (525 aa).

Residues 9-207 (RILILDFGSQ…VRDICQCEAL (199 aa)) form the Glutamine amidotransferase type-1 domain. The Nucleophile role is filled by C86. Catalysis depends on residues H181 and E183. A GMPS ATP-PPase domain is found at 208–400 (WTPAKIIDDA…LGLPYDMLYR (193 aa)). 235 to 241 (SGGVDSS) contributes to the ATP binding site.

As to quaternary structure, homodimer.

It carries out the reaction XMP + L-glutamine + ATP + H2O = GMP + L-glutamate + AMP + diphosphate + 2 H(+). It participates in purine metabolism; GMP biosynthesis; GMP from XMP (L-Gln route): step 1/1. Functionally, catalyzes the synthesis of GMP from XMP. This Escherichia coli O8 (strain IAI1) protein is GMP synthase [glutamine-hydrolyzing].